We begin with the raw amino-acid sequence, 285 residues long: Bifunctional protein FolD (285 aa).

Residues 165-167 and Ser190 contribute to the NADP(+) site; that span reads GRS.

It belongs to the tetrahydrofolate dehydrogenase/cyclohydrolase family. As to quaternary structure, homodimer.

It carries out the reaction (6R)-5,10-methylene-5,6,7,8-tetrahydrofolate + NADP(+) = (6R)-5,10-methenyltetrahydrofolate + NADPH. It catalyses the reaction (6R)-5,10-methenyltetrahydrofolate + H2O = (6R)-10-formyltetrahydrofolate + H(+). It participates in one-carbon metabolism; tetrahydrofolate interconversion. In terms of biological role, catalyzes the oxidation of 5,10-methylenetetrahydrofolate to 5,10-methenyltetrahydrofolate and then the hydrolysis of 5,10-methenyltetrahydrofolate to 10-formyltetrahydrofolate. This chain is Bifunctional protein FolD, found in Streptococcus pneumoniae (strain ATCC BAA-255 / R6).